Here is a 290-residue protein sequence, read N- to C-terminus: MLRNKIDKIRLLFRKDRESYSCFYRILGFYPRNIRLYEQALLHKSTAVRSEKGRPLNNERLEFLGDAILDAIVGDIVYQHFEGKREGFLTNTRSKIVQRETLNKLAVEIGLDKLIKYSTRSSSHNSYMYGNAFEAFIGAIYLDRGYECCKQFMERRIIEPYIDLDKLSRKEVNFKSKLIEWSQKNKMEVSFELIEQSLDKENNPVFQTEVRIEGILGGSGTGYSKKESQQNAAQMTLKKIKGDPEFMASVQEAKTQNNVPAEDTTPESETSLTAENQQIDEIISTEEISV.

The 126-residue stretch at 20–145 folds into the RNase III domain; it reads YSCFYRILGF…FIGAIYLDRG (126 aa). Glu-62 provides a ligand contact to Mg(2+). The active site involves Asp-66. Mg(2+) is bound by residues Asn-131 and Glu-134. Glu-134 is an active-site residue. The DRBM domain maps to 173-242; that stretch reads NFKSKLIEWS…AQMTLKKIKG (70 aa). Positions 254 to 290 are disordered; sequence KTQNNVPAEDTTPESETSLTAENQQIDEIISTEEISV. Positions 267 to 279 are enriched in polar residues; sequence ESETSLTAENQQI.

This sequence belongs to the ribonuclease III family. As to quaternary structure, homodimer. Mg(2+) is required as a cofactor.

The protein localises to the cytoplasm. The catalysed reaction is Endonucleolytic cleavage to 5'-phosphomonoester.. Its function is as follows. Digests double-stranded RNA. Involved in the processing of primary rRNA transcript to yield the immediate precursors to the large and small rRNAs (23S and 16S). Processes some mRNAs, and tRNAs when they are encoded in the rRNA operon. Processes pre-crRNA and tracrRNA of type II CRISPR loci if present in the organism. The protein is Ribonuclease 3 of Bacteroides fragilis (strain ATCC 25285 / DSM 2151 / CCUG 4856 / JCM 11019 / LMG 10263 / NCTC 9343 / Onslow / VPI 2553 / EN-2).